The sequence spans 395 residues: NAD(P)H-quinone oxidoreductase subunit H (395 aa).

The protein belongs to the complex I 49 kDa subunit family. NDH-1 can be composed of about 15 different subunits; different subcomplexes with different compositions have been identified which probably have different functions.

Its subcellular location is the cellular thylakoid membrane. It catalyses the reaction a plastoquinone + NADH + (n+1) H(+)(in) = a plastoquinol + NAD(+) + n H(+)(out). The enzyme catalyses a plastoquinone + NADPH + (n+1) H(+)(in) = a plastoquinol + NADP(+) + n H(+)(out). Its function is as follows. NDH-1 shuttles electrons from an unknown electron donor, via FMN and iron-sulfur (Fe-S) centers, to quinones in the respiratory and/or the photosynthetic chain. The immediate electron acceptor for the enzyme in this species is believed to be plastoquinone. Couples the redox reaction to proton translocation, and thus conserves the redox energy in a proton gradient. Cyanobacterial NDH-1 also plays a role in inorganic carbon-concentration. This is NAD(P)H-quinone oxidoreductase subunit H from Prochlorococcus marinus (strain MIT 9312).